A 274-amino-acid polypeptide reads, in one-letter code: 3-methyl-2-oxobutanoate hydroxymethyltransferase (274 aa).

Mg(2+) is bound by residues aspartate 50 and aspartate 89. Residues 50-51 (DS), aspartate 89, and lysine 119 each bind 3-methyl-2-oxobutanoate. Residue glutamate 121 participates in Mg(2+) binding. Glutamate 188 (proton acceptor) is an active-site residue.

The protein belongs to the PanB family. Homodecamer; pentamer of dimers. Mg(2+) serves as cofactor.

It is found in the cytoplasm. It carries out the reaction 3-methyl-2-oxobutanoate + (6R)-5,10-methylene-5,6,7,8-tetrahydrofolate + H2O = 2-dehydropantoate + (6S)-5,6,7,8-tetrahydrofolate. It functions in the pathway cofactor biosynthesis; (R)-pantothenate biosynthesis; (R)-pantoate from 3-methyl-2-oxobutanoate: step 1/2. Catalyzes the reversible reaction in which hydroxymethyl group from 5,10-methylenetetrahydrofolate is transferred onto alpha-ketoisovalerate to form ketopantoate. In Methylorubrum extorquens (strain PA1) (Methylobacterium extorquens), this protein is 3-methyl-2-oxobutanoate hydroxymethyltransferase.